A 403-amino-acid polypeptide reads, in one-letter code: Putative queuine tRNA-ribosyltransferase (403 aa).

Asp-91 (proton acceptor) is an active-site residue. Substrate-binding positions include 91-95 (DSGGF), Asp-177, Gln-218, and Gly-245. The segment at 275–281 (GIGAIED) is RNA binding. Residue Asp-294 is the Nucleophile of the active site. Residues 299 to 303 (ARWAR) are RNA binding; important for wobble base 34 recognition. Residues Cys-341, Cys-343, Cys-346, and His-372 each contribute to the Zn(2+) site.

The protein belongs to the queuine tRNA-ribosyltransferase family. Homodimer. Within each dimer, one monomer is responsible for RNA recognition and catalysis, while the other monomer binds to the replacement base PreQ1. The cofactor is Zn(2+).

The enzyme catalyses 7-aminomethyl-7-carbaguanine + guanosine(34) in tRNA = 7-aminomethyl-7-carbaguanosine(34) in tRNA + guanine. Catalyzes the base-exchange of a guanine (G) residue with the queuine precursor 7-aminomethyl-7-deazaguanine (PreQ1) at position 34 (anticodon wobble position) in tRNAs with GU(N) anticodons (tRNA-Asp, -Asn, -His and -Tyr). Catalysis occurs through a double-displacement mechanism. The nucleophile active site attacks the C1' of nucleotide 34 to detach the guanine base from the RNA, forming a covalent enzyme-RNA intermediate. The proton acceptor active site deprotonates the incoming PreQ1, allowing a nucleophilic attack on the C1' of the ribose to form the product. After dissociation, two additional enzymatic reactions on the tRNA convert PreQ1 to queuine (Q), resulting in the hypermodified nucleoside queuosine (7-(((4,5-cis-dihydroxy-2-cyclopenten-1-yl)amino)methyl)-7-deazaguanosine). This is Putative queuine tRNA-ribosyltransferase from Archaeoglobus fulgidus (strain ATCC 49558 / DSM 4304 / JCM 9628 / NBRC 100126 / VC-16).